The primary structure comprises 654 residues: RNA polymerase I-specific transcription initiation factor tif-1A (654 aa).

The interval 1–37 is disordered; the sequence is MKRSTANAPKLSPKHESESDPKKVKLEEEAKPTVNQA. Residues 13-31 show a composition bias toward basic and acidic residues; that stretch reads PKHESESDPKKVKLEEEAK.

This sequence belongs to the RRN3 family.

It localises to the nucleus. Its subcellular location is the nucleolus. In terms of biological role, required for efficient transcription initiation by RNA polymerase I (Pol I). In Caenorhabditis elegans, this protein is RNA polymerase I-specific transcription initiation factor tif-1A.